We begin with the raw amino-acid sequence, 21 residues long: 23S rRNA methylase leader peptide (21 aa).

Its function is as follows. Involved in erythromycin resistance. The sequence is that of 23S rRNA methylase leader peptide from Corynebacterium diphtheriae.